The primary structure comprises 813 residues: Leucine--tRNA ligase (813 aa).

Residues 42 to 52 carry the 'HIGH' region motif; sequence PYTSGNLHIGH. Positions 580–584 match the 'KMSKS' region motif; the sequence is KMSKS. Residue Lys583 participates in ATP binding.

It belongs to the class-I aminoacyl-tRNA synthetase family.

The protein localises to the cytoplasm. It carries out the reaction tRNA(Leu) + L-leucine + ATP = L-leucyl-tRNA(Leu) + AMP + diphosphate. In Dehalococcoides mccartyi (strain CBDB1), this protein is Leucine--tRNA ligase.